Here is a 153-residue protein sequence, read N- to C-terminus: Coiled-coil domain-containing protein 182 (153 aa).

A coiled-coil region spans residues 46–109 (ADLEILQQKV…RLREEEDRGI (64 aa)).

The polypeptide is Coiled-coil domain-containing protein 182 (CCDC182) (Homo sapiens (Human)).